Consider the following 30-residue polypeptide: Dermonecrotic toxin LlSicTox-alphaIII-1 (30 aa).

The active site involves His-12.

This sequence belongs to the arthropod phospholipase D family. Class I subfamily. Mg(2+) is required as a cofactor. In terms of processing, contains 1 disulfide bond. In terms of tissue distribution, expressed by the venom gland.

It localises to the secreted. The enzyme catalyses an N-(acyl)-sphingosylphosphocholine = an N-(acyl)-sphingosyl-1,3-cyclic phosphate + choline. The catalysed reaction is an N-(acyl)-sphingosylphosphoethanolamine = an N-(acyl)-sphingosyl-1,3-cyclic phosphate + ethanolamine. It catalyses the reaction a 1-acyl-sn-glycero-3-phosphocholine = a 1-acyl-sn-glycero-2,3-cyclic phosphate + choline. It carries out the reaction a 1-acyl-sn-glycero-3-phosphoethanolamine = a 1-acyl-sn-glycero-2,3-cyclic phosphate + ethanolamine. In terms of biological role, dermonecrotic toxins cleave the phosphodiester linkage between the phosphate and headgroup of certain phospholipids (sphingolipid and lysolipid substrates), forming an alcohol (often choline) and a cyclic phosphate. This toxin acts on sphingomyelin (SM). It may also act on ceramide phosphoethanolamine (CPE), lysophosphatidylcholine (LPC) and lysophosphatidylethanolamine (LPE), but not on lysophosphatidylserine (LPS), and lysophosphatidylglycerol (LPG). It acts by transphosphatidylation, releasing exclusively cyclic phosphate products as second products. In vivo, intradermal injection induces dermonecrosis. Induces hemolysis, increased vascular permeability, edema, inflammatory response, and platelet aggregation. In Loxosceles laeta (South American recluse spider), this protein is Dermonecrotic toxin LlSicTox-alphaIII-1.